The following is a 228-amino-acid chain: Eukaryotic translation initiation factor 6 (228 aa).

The protein belongs to the eIF-6 family. As to quaternary structure, monomer. Associates with the 60S ribosomal subunit.

It is found in the cytoplasm. The protein localises to the nucleus. It localises to the nucleolus. Its function is as follows. Binds to the 60S ribosomal subunit and prevents its association with the 40S ribosomal subunit to form the 80S initiation complex in the cytoplasm. May also be involved in ribosome biogenesis. The protein is Eukaryotic translation initiation factor 6 of Guillardia theta (Cryptophyte).